Here is a 118-residue protein sequence, read N- to C-terminus: Small ribosomal subunit protein mS41 (118 aa).

A mitochondrion-targeting transit peptide spans 1 to 24 (MLRVVAKAQYPAAVRCFSTSHAAF).

The protein belongs to the mitochondrion-specific ribosomal protein mS41 family.

Its subcellular location is the mitochondrion. Its function is as follows. Involved in telomere length regulation. In Yarrowia lipolytica (strain CLIB 122 / E 150) (Yeast), this protein is Small ribosomal subunit protein mS41 (FYV4).